The following is a 451-amino-acid chain: Phosphoglucosamine mutase (451 aa).

The Phosphoserine intermediate role is filled by Ser101. Mg(2+)-binding residues include Ser101, Asp240, Asp242, and Asp244. Phosphoserine is present on Ser101.

This sequence belongs to the phosphohexose mutase family. Requires Mg(2+) as cofactor. Post-translationally, activated by phosphorylation.

It carries out the reaction alpha-D-glucosamine 1-phosphate = D-glucosamine 6-phosphate. Catalyzes the conversion of glucosamine-6-phosphate to glucosamine-1-phosphate. This Streptococcus pyogenes serotype M3 (strain SSI-1) protein is Phosphoglucosamine mutase.